Here is a 558-residue protein sequence, read N- to C-terminus: Arginine--tRNA ligase (558 aa).

A 'HIGH' region motif is present at residues 116-126 (ANPNGPLHVGH).

It belongs to the class-I aminoacyl-tRNA synthetase family.

It localises to the cytoplasm. It catalyses the reaction tRNA(Arg) + L-arginine + ATP = L-arginyl-tRNA(Arg) + AMP + diphosphate. This chain is Arginine--tRNA ligase, found in Methanocorpusculum labreanum (strain ATCC 43576 / DSM 4855 / Z).